Here is a 296-residue protein sequence, read N- to C-terminus: Phosphoribosylaminoimidazole-succinocarboxamide synthase (296 aa).

Belongs to the SAICAR synthetase family.

It carries out the reaction 5-amino-1-(5-phospho-D-ribosyl)imidazole-4-carboxylate + L-aspartate + ATP = (2S)-2-[5-amino-1-(5-phospho-beta-D-ribosyl)imidazole-4-carboxamido]succinate + ADP + phosphate + 2 H(+). It participates in purine metabolism; IMP biosynthesis via de novo pathway; 5-amino-1-(5-phospho-D-ribosyl)imidazole-4-carboxamide from 5-amino-1-(5-phospho-D-ribosyl)imidazole-4-carboxylate: step 1/2. The polypeptide is Phosphoribosylaminoimidazole-succinocarboxamide synthase (Citrifermentans bemidjiense (strain ATCC BAA-1014 / DSM 16622 / JCM 12645 / Bem) (Geobacter bemidjiensis)).